Consider the following 428-residue polypeptide: Glutamyl-tRNA reductase (428 aa).

Substrate-binding positions include 55-58, Ser114, 119-121, and Gln125; these read TCNR and ETQ. The active-site Nucleophile is the Cys56. 194–199 provides a ligand contact to NADP(+); sequence GAGEMI.

Belongs to the glutamyl-tRNA reductase family. As to quaternary structure, homodimer.

The enzyme catalyses (S)-4-amino-5-oxopentanoate + tRNA(Glu) + NADP(+) = L-glutamyl-tRNA(Glu) + NADPH + H(+). Its pathway is porphyrin-containing compound metabolism; protoporphyrin-IX biosynthesis; 5-aminolevulinate from L-glutamyl-tRNA(Glu): step 1/2. Catalyzes the NADPH-dependent reduction of glutamyl-tRNA(Glu) to glutamate 1-semialdehyde (GSA). This is Glutamyl-tRNA reductase from Paraburkholderia xenovorans (strain LB400).